The chain runs to 293 residues: Ribosomal protein L11 methyltransferase (293 aa).

Residues threonine 145, glycine 166, aspartate 188, and asparagine 230 each coordinate S-adenosyl-L-methionine.

The protein belongs to the methyltransferase superfamily. PrmA family.

It is found in the cytoplasm. The enzyme catalyses L-lysyl-[protein] + 3 S-adenosyl-L-methionine = N(6),N(6),N(6)-trimethyl-L-lysyl-[protein] + 3 S-adenosyl-L-homocysteine + 3 H(+). Its function is as follows. Methylates ribosomal protein L11. The polypeptide is Ribosomal protein L11 methyltransferase (Shewanella baltica (strain OS155 / ATCC BAA-1091)).